Consider the following 356-residue polypeptide: Protein pelota homolog (356 aa).

Belongs to the eukaryotic release factor 1 family. Pelota subfamily. As to quaternary structure, monomer. It depends on a divalent metal cation as a cofactor.

It is found in the cytoplasm. Its function is as follows. May function in recognizing stalled ribosomes, interact with stem-loop structures in stalled mRNA molecules, and effect endonucleolytic cleavage of the mRNA. May play a role in the release non-functional ribosomes and degradation of damaged mRNAs. Has endoribonuclease activity. In Aeropyrum pernix (strain ATCC 700893 / DSM 11879 / JCM 9820 / NBRC 100138 / K1), this protein is Protein pelota homolog.